The following is a 251-amino-acid chain: Aliphatic sulfonates import ATP-binding protein SsuB (251 aa).

The ABC transporter domain occupies Val-3 to Gln-231. Residue Gly-39–Ser-46 coordinates ATP.

This sequence belongs to the ABC transporter superfamily. Aliphatic sulfonates importer (TC 3.A.1.17.2) family. The complex is composed of two ATP-binding proteins (SsuB), two transmembrane proteins (SsuC) and a solute-binding protein (SsuA).

Its subcellular location is the cell membrane. It catalyses the reaction ATP + H2O + aliphatic sulfonate-[sulfonate-binding protein]Side 1 = ADP + phosphate + aliphatic sulfonateSide 2 + [sulfonate-binding protein]Side 1.. Part of the ABC transporter complex SsuABC involved in aliphatic sulfonates import. Responsible for energy coupling to the transport system. The polypeptide is Aliphatic sulfonates import ATP-binding protein SsuB (Bacillus thuringiensis subsp. konkukian (strain 97-27)).